The following is a 463-amino-acid chain: Putative ankyrin repeat protein R579 (463 aa).

ANK repeat units follow at residues 124-154, 156-181, 242-271, 273-299, 300-328, 329-355, 356-385, and 387-416; these read LKTD…KCTI, SITR…SENI, KEKN…QFNP, IYLW…DYRP, HIDR…VSQE, NINE…MGAD, INYK…DITT, and GSND…TITL.

In Acanthamoeba polyphaga (Amoeba), this protein is Putative ankyrin repeat protein R579.